We begin with the raw amino-acid sequence, 148 residues long: Large ribosomal subunit protein bL9 (148 aa).

As to quaternary structure, part of the 50S ribosomal subunit.

Its function is as follows. Binds to the 23S rRNA. Extends more that 50 Angstroms beyond the surface of the 70S ribosome. This Thermus thermophilus (strain ATCC 27634 / DSM 579 / HB8) protein is Large ribosomal subunit protein bL9 (rplI).